A 581-amino-acid polypeptide reads, in one-letter code: Chaperonin GroEL 1 (581 aa).

ATP is bound by residues 29 to 32 (TIGP), 86 to 90 (DGTTT), glycine 413, and aspartate 492.

This sequence belongs to the chaperonin (HSP60) family. In terms of assembly, forms a cylinder of 14 subunits composed of two heptameric rings stacked back-to-back. Interacts with the co-chaperonin GroES.

The protein resides in the cytoplasm. The enzyme catalyses ATP + H2O + a folded polypeptide = ADP + phosphate + an unfolded polypeptide.. Its function is as follows. Together with its co-chaperonin GroES, plays an essential role in assisting protein folding. The GroEL-GroES system forms a nano-cage that allows encapsulation of the non-native substrate proteins and provides a physical environment optimized to promote and accelerate protein folding. The protein is Chaperonin GroEL 1 of Prochlorococcus marinus subsp. pastoris (strain CCMP1986 / NIES-2087 / MED4).